Consider the following 1934-residue polypeptide: Tudor domain-containing protein 15 (1934 aa).

Tudor domains are found at residues 59 to 117 (NVEI…LFEL), 289 to 347 (CDNF…FILV), 531 to 589 (KPEP…FCEL), 799 to 856 (PYEI…FLLL), 1011 to 1070 (DSNK…FPEL), and 1342 to 1401 (KPLV…FLTV). The disordered stretch occupies residues 1490-1510 (VRPGDNEMKKGKSNESEGSMN). Positions 1491-1504 (RPGDNEMKKGKSNE) are enriched in basic and acidic residues. Tudor domains are found at residues 1574 to 1633 (SIEK…IRNI) and 1780 to 1838 (FIIP…PEEL).

The polypeptide is Tudor domain-containing protein 15 (TDRD15) (Homo sapiens (Human)).